The sequence spans 355 residues: N5-carboxyaminoimidazole ribonucleotide synthase (355 aa).

ATP-binding positions include Arg80, Lys120, 125 to 131 (GYDGRGQ), 153 to 156 (EQGI), Glu161, His184, and 237 to 238 (NE). The region spanning 84-267 (KQLFDKLHLP…QFELHLRAIT (184 aa)) is the ATP-grasp domain.

The protein belongs to the PurK/PurT family. In terms of assembly, homodimer.

The enzyme catalyses 5-amino-1-(5-phospho-beta-D-ribosyl)imidazole + hydrogencarbonate + ATP = 5-carboxyamino-1-(5-phospho-D-ribosyl)imidazole + ADP + phosphate + 2 H(+). It participates in purine metabolism; IMP biosynthesis via de novo pathway; 5-amino-1-(5-phospho-D-ribosyl)imidazole-4-carboxylate from 5-amino-1-(5-phospho-D-ribosyl)imidazole (N5-CAIR route): step 1/2. Its function is as follows. Catalyzes the ATP-dependent conversion of 5-aminoimidazole ribonucleotide (AIR) and HCO(3)(-) to N5-carboxyaminoimidazole ribonucleotide (N5-CAIR). This Escherichia coli (strain K12) protein is N5-carboxyaminoimidazole ribonucleotide synthase.